The following is a 238-amino-acid chain: Ribonuclease PH (238 aa).

Phosphate-binding positions include Arg86 and Gly124 to Arg126.

The protein belongs to the RNase PH family. In terms of assembly, homohexameric ring arranged as a trimer of dimers.

The catalysed reaction is tRNA(n+1) + phosphate = tRNA(n) + a ribonucleoside 5'-diphosphate. Phosphorolytic 3'-5' exoribonuclease that plays an important role in tRNA 3'-end maturation. Removes nucleotide residues following the 3'-CCA terminus of tRNAs; can also add nucleotides to the ends of RNA molecules by using nucleoside diphosphates as substrates, but this may not be physiologically important. Probably plays a role in initiation of 16S rRNA degradation (leading to ribosome degradation) during starvation. This is Ribonuclease PH from Aliivibrio fischeri (strain ATCC 700601 / ES114) (Vibrio fischeri).